Consider the following 373-residue polypeptide: Glutamate 5-kinase (373 aa).

Residue Lys12 coordinates ATP. Substrate-binding residues include Ser52, Asp139, and Asn154. 216–222 (TGGMVTK) contacts ATP. Positions 281-359 (RGSICVDDGA…QELNAVLGGN (79 aa)) constitute a PUA domain.

It belongs to the glutamate 5-kinase family.

Its subcellular location is the cytoplasm. The enzyme catalyses L-glutamate + ATP = L-glutamyl 5-phosphate + ADP. Its pathway is amino-acid biosynthesis; L-proline biosynthesis; L-glutamate 5-semialdehyde from L-glutamate: step 1/2. In terms of biological role, catalyzes the transfer of a phosphate group to glutamate to form L-glutamate 5-phosphate. The polypeptide is Glutamate 5-kinase (Dehalococcoides mccartyi (strain CBDB1)).